We begin with the raw amino-acid sequence, 105 residues long: Large ribosomal subunit protein uL24 (105 aa).

It belongs to the universal ribosomal protein uL24 family. As to quaternary structure, part of the 50S ribosomal subunit.

Its function is as follows. One of two assembly initiator proteins, it binds directly to the 5'-end of the 23S rRNA, where it nucleates assembly of the 50S subunit. One of the proteins that surrounds the polypeptide exit tunnel on the outside of the subunit. This is Large ribosomal subunit protein uL24 from Thermotoga maritima (strain ATCC 43589 / DSM 3109 / JCM 10099 / NBRC 100826 / MSB8).